A 568-amino-acid polypeptide reads, in one-letter code: Proline--tRNA ligase (568 aa).

The protein belongs to the class-II aminoacyl-tRNA synthetase family. ProS type 1 subfamily. As to quaternary structure, homodimer.

The protein localises to the cytoplasm. The enzyme catalyses tRNA(Pro) + L-proline + ATP = L-prolyl-tRNA(Pro) + AMP + diphosphate. In terms of biological role, catalyzes the attachment of proline to tRNA(Pro) in a two-step reaction: proline is first activated by ATP to form Pro-AMP and then transferred to the acceptor end of tRNA(Pro). As ProRS can inadvertently accommodate and process non-cognate amino acids such as alanine and cysteine, to avoid such errors it has two additional distinct editing activities against alanine. One activity is designated as 'pretransfer' editing and involves the tRNA(Pro)-independent hydrolysis of activated Ala-AMP. The other activity is designated 'posttransfer' editing and involves deacylation of mischarged Ala-tRNA(Pro). The misacylated Cys-tRNA(Pro) is not edited by ProRS. The chain is Proline--tRNA ligase from Halorhodospira halophila (strain DSM 244 / SL1) (Ectothiorhodospira halophila (strain DSM 244 / SL1)).